The chain runs to 35 residues: uncharacterized protein (35 aa).

Residues 14-34 form a helical membrane-spanning segment; that stretch reads VVVLLAICGAMLLLRWAAMIW.

Its subcellular location is the membrane. This is an uncharacterized protein from Escherichia coli (strain K12).